The primary structure comprises 494 residues: Glutamyl-tRNA(Gln) amidotransferase subunit A (494 aa).

Residues Lys81 and Ser156 each act as charge relay system in the active site. Ser180 acts as the Acyl-ester intermediate in catalysis.

It belongs to the amidase family. GatA subfamily. In terms of assembly, heterotrimer of A, B and C subunits.

The enzyme catalyses L-glutamyl-tRNA(Gln) + L-glutamine + ATP + H2O = L-glutaminyl-tRNA(Gln) + L-glutamate + ADP + phosphate + H(+). Functionally, allows the formation of correctly charged Gln-tRNA(Gln) through the transamidation of misacylated Glu-tRNA(Gln) in organisms which lack glutaminyl-tRNA synthetase. The reaction takes place in the presence of glutamine and ATP through an activated gamma-phospho-Glu-tRNA(Gln). This chain is Glutamyl-tRNA(Gln) amidotransferase subunit A, found in Mycobacterium tuberculosis (strain ATCC 25177 / H37Ra).